We begin with the raw amino-acid sequence, 318 residues long: Ankyrin repeat and SOCS box protein 7 (318 aa).

ANK repeat units lie at residues 13–42, 46–75, 80–109, 116–145, 149–178, 180–208, and 213–242; these read QEEL…SPNG, NGWT…DPTV, GGFT…RSDI, DGWT…EVDP, KGTT…NIDI, NGFL…DTNL, and DGQT…DTNT. One can recognise an SOCS box domain in the interval 265–318; sequence LDFLQEVTRQPRNLQDLCRIKIRQCIGLQNLKLLDELPIAKVMKDYLKHKFDDI.

Belongs to the ankyrin SOCS box (ASB) family. As to quaternary structure, interacts with CUL5. Interacts with RNF7. Interacts with PSRC1.

It functions in the pathway protein modification; protein ubiquitination. In terms of biological role, probable substrate-recognition component of a SCF-like ECS (Elongin-Cullin-SOCS-box protein) E3 ubiquitin-protein ligase complex which mediates the ubiquitination and subsequent proteasomal degradation of target proteins. Plays a role in spindle dynamics and genome integrity by targeting the mitotic progression protein PSRC1 for proteasomal degradation in a cell cycle-dependent manner. Also participates in meiosis by mediating the proper attachment between kinetochores and microtubules. The polypeptide is Ankyrin repeat and SOCS box protein 7 (ASB7) (Homo sapiens (Human)).